Reading from the N-terminus, the 252-residue chain is 3-dehydroquinate dehydratase (252 aa).

3-dehydroquinate is bound by residues serine 21, 46–48 (EWR), and arginine 82. The active-site Proton donor/acceptor is histidine 143. The active-site Schiff-base intermediate with substrate is the lysine 170. Residues arginine 213, serine 232, and glutamine 236 each contribute to the 3-dehydroquinate site.

This sequence belongs to the type-I 3-dehydroquinase family. As to quaternary structure, homodimer.

The catalysed reaction is 3-dehydroquinate = 3-dehydroshikimate + H2O. Its pathway is metabolic intermediate biosynthesis; chorismate biosynthesis; chorismate from D-erythrose 4-phosphate and phosphoenolpyruvate: step 3/7. With respect to regulation, inhibited by (2R)-2-methyl-3-dehydroquinic acid. In terms of biological role, involved in the third step of the chorismate pathway, which leads to the biosynthesis of aromatic amino acids. Catalyzes the cis-dehydration of 3-dehydroquinate (DHQ) and introduces the first double bond of the aromatic ring to yield 3-dehydroshikimate. The reaction involves the formation of an imine intermediate between the keto group of 3-dehydroquinate and the epsilon-amino group of a Lys-170 at the active site. The polypeptide is 3-dehydroquinate dehydratase (Salmonella typhimurium (strain LT2 / SGSC1412 / ATCC 700720)).